A 260-amino-acid chain; its full sequence is Phosphate import ATP-binding protein PstB (260 aa).

Residues 14–255 (IETENLNLFY…PKNTKTEEYI (242 aa)) form the ABC transporter domain. 46–53 (GPSGCGKS) is an ATP binding site.

The protein belongs to the ABC transporter superfamily. Phosphate importer (TC 3.A.1.7) family. As to quaternary structure, the complex is composed of two ATP-binding proteins (PstB), two transmembrane proteins (PstC and PstA) and a solute-binding protein (PstS).

The protein resides in the cell inner membrane. The enzyme catalyses phosphate(out) + ATP + H2O = ADP + 2 phosphate(in) + H(+). Its function is as follows. Part of the ABC transporter complex PstSACB involved in phosphate import. Responsible for energy coupling to the transport system. This Borreliella afzelii (strain PKo) (Borrelia afzelii) protein is Phosphate import ATP-binding protein PstB.